A 187-amino-acid chain; its full sequence is Elongation factor P (187 aa).

This sequence belongs to the elongation factor P family.

The protein resides in the cytoplasm. Its pathway is protein biosynthesis; polypeptide chain elongation. In terms of biological role, involved in peptide bond synthesis. Stimulates efficient translation and peptide-bond synthesis on native or reconstituted 70S ribosomes in vitro. Probably functions indirectly by altering the affinity of the ribosome for aminoacyl-tRNA, thus increasing their reactivity as acceptors for peptidyl transferase. The protein is Elongation factor P of Helicobacter pylori (strain P12).